The sequence spans 143 residues: uncharacterized protein (143 aa).

In terms of domain architecture, HTH marR-type spans 5-137; the sequence is DARLASDLSL…LRSAADLMLA (133 aa). The H-T-H motif DNA-binding region spans 51-74; it reads PGALAIRERVRPPSMTRVIASLAD.

As to quaternary structure, homodimer.

This is an uncharacterized protein from Mycobacterium bovis (strain ATCC BAA-935 / AF2122/97).